Here is a 379-residue protein sequence, read N- to C-terminus: MAKRDYYEVLGVGKNASDDEIKKAYRKLAMKHHPDRNPDNKEAEEKFKEVKEAYEMLSDPEKKAAYDQYGHAGVDPNMAGGFGGGGFGGGGFAEAFGDIFGDIFGQAAGGGRRGGGPQAYRGADLRYSMEISLEQAAHGHEAQIRVPHWDDCEHCHGNGAEPGSSVETCPTCNGVGQVRVSQGFFTMQQTCPKCHGSGKFIPKPCTKCHGQGKLKSQKTLEVKIPAGIDEGMRIRSSGNGEPGINGGPPGDLYVEVHIKQHPVFERDGDDLHCQMPISFATAALGGDIEVPTLGGRASFPVPEGTQAGKTFRLRGKGIKGVRSGYPGDLYVHVNVETPVKLTEAQKDILRQFDRSVHEGGSRHSPQEQSWLDKVKSFFS.

In terms of domain architecture, J spans 5 to 70; it reads DYYEVLGVGK…EKKAAYDQYG (66 aa). The CR-type zinc-finger motif lies at 139–217; sequence GHEAQIRVPH…CHGQGKLKSQ (79 aa). The Zn(2+) site is built by Cys152, Cys155, Cys169, Cys172, Cys191, Cys194, Cys205, and Cys208. 4 CXXCXGXG motif repeats span residues 152–159, 169–176, 191–198, and 205–212; these read CEHCHGNG, CPTCNGVG, CPKCHGSG, and CTKCHGQG.

The protein belongs to the DnaJ family. As to quaternary structure, homodimer. It depends on Zn(2+) as a cofactor.

It localises to the cytoplasm. In terms of biological role, participates actively in the response to hyperosmotic and heat shock by preventing the aggregation of stress-denatured proteins and by disaggregating proteins, also in an autonomous, DnaK-independent fashion. Unfolded proteins bind initially to DnaJ; upon interaction with the DnaJ-bound protein, DnaK hydrolyzes its bound ATP, resulting in the formation of a stable complex. GrpE releases ADP from DnaK; ATP binding to DnaK triggers the release of the substrate protein, thus completing the reaction cycle. Several rounds of ATP-dependent interactions between DnaJ, DnaK and GrpE are required for fully efficient folding. Also involved, together with DnaK and GrpE, in the DNA replication of plasmids through activation of initiation proteins. The polypeptide is Chaperone protein DnaJ (Cupriavidus metallidurans (strain ATCC 43123 / DSM 2839 / NBRC 102507 / CH34) (Ralstonia metallidurans)).